Reading from the N-terminus, the 227-residue chain is Cytosolic-abundant heat soluble protein 106094 (227 aa).

The tract at residues 1 to 28 (MEAMNMNIPRDAMFVPPPESEQNGYHEK) is disordered. The stretch at 90-140 (VEEARRDYAAKTRENEMLGQQYEKELERKSEAYRKHQEVEADKIRKELEKQ) forms a coiled coil. CAHS motif stretches follow at residues 122 to 140 (YRKH…LEKQ) and 159 to 177 (QKRM…MDRE). Positions 198–227 (LDSSAAGTESGGHVVSQSEKFTERNREMKR) are disordered. Basic and acidic residues predominate over residues 217-227 (KFTERNREMKR).

It belongs to the Cytosolic-abundant heat soluble protein (CAHS) family.

The protein localises to the cytoplasm. In terms of biological role, CAHS proteins are cytosolic heat soluble proteins that seem to contribute to the anhydrobiosis in tardigrades, but their specific mechanisms are yet to be identified. It is possible that protection during anhydrobiosis might occur via the stabilization of vitrifying small molecules such as sugars, but not via the direct glass transition of CAHS proteins themselves. The chain is Cytosolic-abundant heat soluble protein 106094 from Paramacrobiotus richtersi (Water bear).